Consider the following 410-residue polypeptide: Cathepsin D (410 aa).

A signal peptide spans 1–20 (MKTPGVLLLILGLLASSSFA). A propeptide spans 21–64 (IIRIPLRKFTSIRRTMTEVGGSVEDLILKGPITKYSMQSSPKTT) (activation peptide). The region spanning 79–405 (YYGDIGIGTP…DRDNNRVGFA (327 aa)) is the Peptidase A1 domain. 2 disulfide bridges follow: C91–C160 and C110–C117. Residue D97 is part of the active site. A glycan (N-linked (GlcNAc...) asparagine) is linked at N134. N261 carries N-linked (GlcNAc...) (high mannose) asparagine glycosylation. The cysteines at positions 284 and 288 are disulfide-linked. The active site involves D293. C327 and C364 form a disulfide bridge.

Belongs to the peptidase A1 family. Consists of a light chain and a heavy chain. Interacts with ADAM30; this leads to activation of CTSD. Interacts with GRN; stabilizes CTSD; increases its proteolytic activity. In terms of processing, N- and O-glycosylated. Undergoes proteolytic cleavage and activation by ADAM30.

It is found in the lysosome. Its subcellular location is the melanosome. The protein localises to the secreted. It localises to the extracellular space. The catalysed reaction is Specificity similar to, but narrower than, that of pepsin A. Does not cleave the 4-Gln-|-His-5 bond in B chain of insulin.. Acid protease active in intracellular protein breakdown. Plays a role in APP processing following cleavage and activation by ADAM30 which leads to APP degradation. This chain is Cathepsin D (Ctsd), found in Mus musculus (Mouse).